A 139-amino-acid polypeptide reads, in one-letter code: Translation initiation factor 5A (139 aa).

Position 36 is a hypusine (K36).

This sequence belongs to the eIF-5A family.

The protein resides in the cytoplasm. Functions by promoting the formation of the first peptide bond. The polypeptide is Translation initiation factor 5A (eif5a) (Aeropyrum pernix (strain ATCC 700893 / DSM 11879 / JCM 9820 / NBRC 100138 / K1)).